A 159-amino-acid chain; its full sequence is L-alanine exporter AlaE (159 aa).

The next 4 membrane-spanning stretches (helical) occupy residues 17 to 37, 48 to 68, 86 to 106, and 110 to 130; these read FAMVIFSFITGMMIEVFVSGM, LSIPVNIAIAWPYGVFRDYLL, MVAYVLFQSPVYACILLAVGA, and QIITAVTSNAFVSGALGIVYG.

This sequence belongs to the AlaE exporter family.

Its subcellular location is the cell inner membrane. Functionally, exports L-alanine. This chain is L-alanine exporter AlaE, found in Photobacterium profundum (strain SS9).